A 968-amino-acid polypeptide reads, in one-letter code: Ribonuclease E (968 aa).

The S1 motif domain maps to 39 to 119 (SNIYKGKITR…GTKGAALTTF (81 aa)). Mg(2+) is bound by residues D303 and D346. Zn(2+) is bound by residues C404 and C407. A required for zinc-mediated homotetramerization and catalytic activity region spans residues 404–407 (CPRC). The segment at 947–968 (IKNSAGAHSATNFSTSPVKKSE) is disordered. The span at 955–968 (SATNFSTSPVKKSE) shows a compositional bias: polar residues.

Belongs to the RNase E/G family. RNase E subfamily. Component of the RNA degradosome, which is a multiprotein complex involved in RNA processing and mRNA degradation. Within the RNA degradosome, RNase E assembles into a homotetramer formed by a dimer of dimers. Zn(2+) is required as a cofactor. The cofactor is Mg(2+).

The protein localises to the cytoplasm. It localises to the cell inner membrane. The enzyme catalyses Endonucleolytic cleavage of single-stranded RNA in A- and U-rich regions.. In terms of biological role, endoribonuclease that plays a central role in RNA processing and decay. Required for the maturation of 5S and 16S rRNAs and the majority of tRNAs. Also involved in the degradation of most mRNAs. The sequence is that of Ribonuclease E from Buchnera aphidicola subsp. Schizaphis graminum (strain Sg).